We begin with the raw amino-acid sequence, 648 residues long: DNA gyrase subunit B (648 aa).

The 115-residue stretch at 432 to 546 (RELFIVEGNS…YGFVYLAQPP (115 aa)) folds into the Toprim domain. Residues Glu-438, Asp-511, and Asp-513 each contribute to the Mg(2+) site.

This sequence belongs to the type II topoisomerase GyrB family. As to quaternary structure, heterotetramer, composed of two GyrA and two GyrB chains. In the heterotetramer, GyrA contains the active site tyrosine that forms a transient covalent intermediate with DNA, while GyrB binds cofactors and catalyzes ATP hydrolysis. Mg(2+) is required as a cofactor. The cofactor is Mn(2+). It depends on Ca(2+) as a cofactor.

The protein localises to the cytoplasm. The enzyme catalyses ATP-dependent breakage, passage and rejoining of double-stranded DNA.. Functionally, a type II topoisomerase that negatively supercoils closed circular double-stranded (ds) DNA in an ATP-dependent manner to modulate DNA topology and maintain chromosomes in an underwound state. Negative supercoiling favors strand separation, and DNA replication, transcription, recombination and repair, all of which involve strand separation. Also able to catalyze the interconversion of other topological isomers of dsDNA rings, including catenanes and knotted rings. Type II topoisomerases break and join 2 DNA strands simultaneously in an ATP-dependent manner. In Metamycoplasma hominis (strain ATCC 23114 / DSM 25592 / NBRC 14850 / NCTC 10111 / PG21) (Mycoplasma hominis), this protein is DNA gyrase subunit B.